The chain runs to 274 residues: MGTLSVNQNKLQKRLRRLAGEAITDYNMIEDGDKVMVCLSGGKDSYTMLDVLLHLQKVAPIKFEIVAVNMDQKQPGFPEHVLPAYLKELGVEYHIVEKDTYSVVKELVPEGKTTCSLCSRLRRGTLYTFADEIGATKMALGHHRDDIVETFFLNMFFNGSLKGMPPKLRADDGRNVVIRPLAYCSEKDIQAYSDMKEFPIIPCNLCGSQENLQRQVVKDMLVEWERKHPGRTESIFRALQNVAPSQLADRNLFDFTSLKIDESATPRFLDVLNI.

The PP-loop motif motif lies at 40 to 45 (SGGKDS). The [4Fe-4S] cluster site is built by cysteine 115, cysteine 118, and cysteine 206.

It belongs to the TtcA family. In terms of assembly, homodimer. Requires Mg(2+) as cofactor. The cofactor is [4Fe-4S] cluster.

The protein resides in the cytoplasm. It catalyses the reaction cytidine(32) in tRNA + S-sulfanyl-L-cysteinyl-[cysteine desulfurase] + AH2 + ATP = 2-thiocytidine(32) in tRNA + L-cysteinyl-[cysteine desulfurase] + A + AMP + diphosphate + H(+). It participates in tRNA modification. Functionally, catalyzes the ATP-dependent 2-thiolation of cytidine in position 32 of tRNA, to form 2-thiocytidine (s(2)C32). The sulfur atoms are provided by the cysteine/cysteine desulfurase (IscS) system. This is tRNA-cytidine(32) 2-sulfurtransferase from Pseudomonas putida (strain W619).